The following is a 1219-amino-acid chain: DNA ligase 4 (1219 aa).

ATP-binding residues include glutamate 251, lysine 253, arginine 258, arginine 273, glutamate 303, phenylalanine 342, glutamate 418, lysine 423, arginine 434, lysine 440, and lysine 442. Residue lysine 253 is the N6-AMP-lysine intermediate of the active site. Glutamate 303 contributes to the Mg(2+) binding site. Glutamate 418 serves as a coordination point for Mg(2+). The segment at 604–632 (NGTTQKQKESESTQDNPKVNKSSKRGEKK) is disordered. 2 consecutive BRCT domains span residues 651 to 739 (GKTS…PKYF) and 807 to 909 (VYFY…VYTL). Disordered regions lie at residues 914–1126 (MEES…MDMK) and 1146–1197 (IPSQ…SDVV). Polar residues predominate over residues 932–960 (VASQGSAQTKEPASSKIAITSSRGRSNTR). The segment covering 1042-1051 (QRSRRGKKAA) has biased composition (basic residues). Residues 1056–1065 (DESDENDELD) are compositionally biased toward acidic residues. 2 stretches are compositionally biased toward basic and acidic residues: residues 1084–1096 (VENEETREPDIAK) and 1117–1126 (RNAKTEMDMK). A compositionally biased stretch (polar residues) spans 1148–1159 (SQKTTETSNRTT).

Belongs to the ATP-dependent DNA ligase family. Interacts with XRCC4 via its tandem BRCT domains. Interacts with POLL. The cofactor is Mg(2+). Widely expressed, with higher levels in young flowers and roots.

It localises to the nucleus. It catalyses the reaction ATP + (deoxyribonucleotide)n-3'-hydroxyl + 5'-phospho-(deoxyribonucleotide)m = (deoxyribonucleotide)n+m + AMP + diphosphate.. In terms of biological role, DNA ligase involved in DNA non-homologous end joining (NHEJ); required for double-strand break (DSB) repair. May be involved for T-DNA integration even if not absolutely required. Seems to be dispensable under normal growth conditions. The protein is DNA ligase 4 (LIG4) of Arabidopsis thaliana (Mouse-ear cress).